Reading from the N-terminus, the 58-residue chain is Large ribosomal subunit protein bL32 (58 aa).

A compositionally biased stretch (basic residues) spans 1–15; sequence MAVPKKKTSKAKRNQ. The tract at residues 1–23 is disordered; the sequence is MAVPKKKTSKAKRNQRSATWKGK.

It belongs to the bacterial ribosomal protein bL32 family.

The sequence is that of Large ribosomal subunit protein bL32 from Parasynechococcus marenigrum (strain WH8102).